A 385-amino-acid polypeptide reads, in one-letter code: UPF0284 protein PMT9312_0438 (385 aa).

This sequence belongs to the UPF0284 family.

The chain is UPF0284 protein PMT9312_0438 from Prochlorococcus marinus (strain MIT 9312).